A 434-amino-acid polypeptide reads, in one-letter code: uncharacterized protein (434 aa).

Transmembrane regions (helical) follow at residues 50–70, 72–92, 95–115, 135–155, 158–178, 179–199, 229–249, 288–308, 319–339, 376–396, and 412–432; these read GSIA…SFTL, TGLL…VLAI, LMAF…LLPV, SPVV…QFGW, SLIA…YFPH, LNPE…IAIT, LPYI…KIFA, GFVP…VAGF, PNPM…VLLL, IFAA…AIYF, and VVAV…GLFV.

The protein resides in the cell membrane. This is an uncharacterized protein from Escherichia coli (strain K12).